Consider the following 511-residue polypeptide: GMP synthase [glutamine-hydrolyzing] (511 aa).

The Glutamine amidotransferase type-1 domain maps to 5 to 195; sequence DILVLDFGSQ…AKYACNCESI (191 aa). Catalysis depends on C82, which acts as the Nucleophile. Catalysis depends on residues H169 and E171. The 191-residue stretch at 196 to 386 folds into the GMPS ATP-PPase domain; that stretch reads WNMGSFAKTQ…LGLSKEVVYR (191 aa). ATP is bound at residue 223–229; that stretch reads SGGVDSS.

As to quaternary structure, homodimer.

The enzyme catalyses XMP + L-glutamine + ATP + H2O = GMP + L-glutamate + AMP + diphosphate + 2 H(+). The protein operates within purine metabolism; GMP biosynthesis; GMP from XMP (L-Gln route): step 1/1. Functionally, catalyzes the synthesis of GMP from XMP. This chain is GMP synthase [glutamine-hydrolyzing] (guaA), found in Campylobacter jejuni subsp. jejuni serotype O:2 (strain ATCC 700819 / NCTC 11168).